A 207-amino-acid polypeptide reads, in one-letter code: uncharacterized protein (207 aa).

The protein belongs to the methyltransferase superfamily.

This is an uncharacterized protein from Escherichia coli (strain K12).